Reading from the N-terminus, the 351-residue chain is Dihydroorotate dehydrogenase (quinone) (351 aa).

FMN-binding positions include 65–69 and T89; that span reads AGLDK. K69 lines the substrate pocket. Position 114 to 118 (114 to 118) interacts with substrate; that stretch reads NRLGF. The FMN site is built by N150 and N183. Substrate is bound at residue N183. The active-site Nucleophile is the S186. N188 is a substrate binding site. FMN-binding residues include K228 and T256. Substrate is bound at residue 257–258; it reads NT. FMN is bound by residues G279, G308, and 329-330; that span reads YT.

It belongs to the dihydroorotate dehydrogenase family. Type 2 subfamily. Monomer. FMN is required as a cofactor.

Its subcellular location is the cell membrane. The enzyme catalyses (S)-dihydroorotate + a quinone = orotate + a quinol. It participates in pyrimidine metabolism; UMP biosynthesis via de novo pathway; orotate from (S)-dihydroorotate (quinone route): step 1/1. In terms of biological role, catalyzes the conversion of dihydroorotate to orotate with quinone as electron acceptor. In Acidovorax ebreus (strain TPSY) (Diaphorobacter sp. (strain TPSY)), this protein is Dihydroorotate dehydrogenase (quinone).